A 438-amino-acid polypeptide reads, in one-letter code: tRNA modification GTPase MnmE (438 aa).

The (6S)-5-formyl-5,6,7,8-tetrahydrofolate site is built by arginine 20, glutamate 78, and lysine 117. Residues 214-359 form the TrmE-type G domain; sequence GIRVLIIGKP…LIDEIKKLFY (146 aa). Residue asparagine 224 participates in K(+) binding. Residues 224 to 229, 243 to 249, and 268 to 271 contribute to the GTP site; these read NVGKST, TDIPGTT, and DTAG. A Mg(2+)-binding site is contributed by serine 228. Positions 243, 245, and 248 each coordinate K(+). Threonine 249 is a Mg(2+) binding site. Residue lysine 438 participates in (6S)-5-formyl-5,6,7,8-tetrahydrofolate binding.

Belongs to the TRAFAC class TrmE-Era-EngA-EngB-Septin-like GTPase superfamily. TrmE GTPase family. In terms of assembly, homodimer. Heterotetramer of two MnmE and two MnmG subunits. K(+) serves as cofactor.

It is found in the cytoplasm. Exhibits a very high intrinsic GTPase hydrolysis rate. Involved in the addition of a carboxymethylaminomethyl (cmnm) group at the wobble position (U34) of certain tRNAs, forming tRNA-cmnm(5)s(2)U34. In Ureaplasma parvum serovar 3 (strain ATCC 27815 / 27 / NCTC 11736), this protein is tRNA modification GTPase MnmE.